A 674-amino-acid chain; its full sequence is MDVQAQRPPLLEVKRNVELKAALVKSSSRVPLSASRLKRGPDQMEDALEPAKKRTRVMGAVTKVDTSRPRGPLLSTVSQTQGHTAAQKGPKKTGPRGCSAIGTVLRSQKPVPAAPAQKPGTSTAPVVVGKRAGKRPAWDLKGQLCDLNEELKRYREKTQTLELENRGLREQLREVQEQATTLGTERNTLEGELASVRSRAEQDQQRLETLSARVLELEECLGTRERLLQELQGERLQLQEERSTLSTQLEEQERRFQATEAALSSSQEEVVCLRQKTEAQVTLLAEQGDRLYGLEMERRRLHNQLQELKGNIRVFCRVRPVLEGESTPSPGFLVFPPGPAGPSDPPTGLSLSRSDDRRSTLTGAPAPTVRHDFSFDRVFPPGSKQEEVFEEIAMLVQSALDGYPVCIFAYGQTGSGKTFTMEGGPRGDPQLEGLIPRAMRHLFSVAQEMSGQGWTYSFVASYVEIYNETVRDLLATGPRKGQGGECEIRRASPGSEELTVTNARYVPVSCEKEVEALLHLAHQNRAVAHTAQNKRSSRSHSVFQLQISGEHAARGLQCGAPLNLVDLAGSERLDPGLHLGPGERDRLRETQAINSSLSTLGLVIMALSNKESHVPYRNSKLTYLLQNSLGGSAKMLMFVNISPLEENVSESLNSLRFASKVNQCVIGTAQANKK.

Phosphoserine occurs at positions 28, 33, and 35. The segment at 66–96 (TSRPRGPLLSTVSQTQGHTAAQKGPKKTGPR) is disordered. Polar residues predominate over residues 75 to 84 (STVSQTQGHT). Positions 146-315 (DLNEELKRYR…QELKGNIRVF (170 aa)) form a coiled coil. The Kinesin motor domain occupies 311–664 (NIRVFCRVRP…LRFASKVNQC (354 aa)). Residues 327-366 (TPSPGFLVFPPGPAGPSDPPTGLSLSRSDDRRSTLTGAPA) are disordered. Over residues 336–345 (PPGPAGPSDP) the composition is skewed to pro residues. Phosphothreonine is present on T360. ATP is bound at residue 411–418 (GQTGSGKT).

The protein belongs to the TRAFAC class myosin-kinesin ATPase superfamily. Kinesin family. NCD subfamily. As to quaternary structure, binds NUBP1 and NUBP2. Interacts with PPP1R42. As to expression, highly expressed in 14 dpc embryos, spleen and NIH3T3 cells. Also expressed in testis, brain, lung, kidney and cultured astrocytes. Very low levels in skeletal muscle and heart.

Its subcellular location is the nucleus. It is found in the cytoplasm. It localises to the cytoskeleton. The protein resides in the microtubule organizing center. The protein localises to the centrosome. Its subcellular location is the spindle. It is found in the early endosome. Functionally, minus end-directed microtubule-dependent motor required for bipolar spindle formation. May contribute to movement of early endocytic vesicles. Regulates cilium formation and structure. This Mus musculus (Mouse) protein is Kinesin-like protein KIFC1.